We begin with the raw amino-acid sequence, 226 residues long: Putative ABC transporter ATP-binding protein BQ02700 (226 aa).

The 222-residue stretch at 4 to 225 folds into the ABC transporter domain; it reads IKFDKVTQVF…VAIKEYIRRM (222 aa). 35 to 42 lines the ATP pocket; the sequence is GANGSGKS.

Belongs to the ABC transporter superfamily.

The protein resides in the cell inner membrane. Functionally, probably part of an ABC transporter complex. Responsible for energy coupling to the transport system. This chain is Putative ABC transporter ATP-binding protein BQ02700, found in Bartonella quintana (strain Toulouse) (Rochalimaea quintana).